A 545-amino-acid polypeptide reads, in one-letter code: Zona pellucida sperm-binding protein 4 (545 aa).

The first 28 residues, 1 to 28 (MARQALRSTLWLLPSILLCFPFCLPLSG), serve as a signal peptide directing secretion. Topologically, residues 29-518 (QHVTELPGVL…HSGTHADSPT (490 aa)) are extracellular. Asn-50 and Asn-74 each carry an N-linked (GlcNAc...) asparagine glycan. Residues 148 to 192 (KVCSPVPVKERLPCASSTISRGDCEELGCCYSSEEEGADSCYYGN) form the P-type domain. A ZP domain is found at 197–471 (HCTKEGHFSI…PSCTVICPAS (275 aa)). Asn-228 carries an N-linked (GlcNAc...) asparagine glycan. Thr-312 carries an O-linked (GalNAc...) threonine glycan. A glycan (N-linked (GlcNAc...) asparagine) is linked at Asn-336. An intrachain disulfide couples Cys-377 to Cys-451. A propeptide spans 472-545 (RRRRKSELYF…VSYLATRKQR (74 aa)) (removed in mature form). A glycan (N-linked (GlcNAc...) asparagine) is linked at Asn-483. A helical membrane pass occupies residues 519–539 (LWVMGLSASMVITGVLVVSYL). The Cytoplasmic segment spans residues 540–545 (ATRKQR).

It belongs to the ZP domain family. ZPB subfamily. Post-translationally, proteolytically cleaved before the transmembrane segment to yield the secreted ectodomain incorporated in the zona pellucida. Expressed in oocytes.

It is found in the zona pellucida. The protein localises to the cell membrane. Component of the zona pellucida, an extracellular matrix surrounding oocytes which mediates sperm binding, induction of the acrosome reaction and prevents post-fertilization polyspermy. The zona pellucida is composed of 3 to 4 glycoproteins, ZP1, ZP2, ZP3, and ZP4. ZP4 may act as a sperm receptor. The polypeptide is Zona pellucida sperm-binding protein 4 (Zp4) (Rattus norvegicus (Rat)).